Here is a 365-residue protein sequence, read N- to C-terminus: 3-dehydroquinate synthase (365 aa).

NAD(+) contacts are provided by residues 95 to 99 (GVVGD), 119 to 120 (TT), Lys132, and Lys141. Zn(2+) contacts are provided by Glu174, His238, and His255.

This sequence belongs to the sugar phosphate cyclases superfamily. Dehydroquinate synthase family. Requires Co(2+) as cofactor. Zn(2+) is required as a cofactor. It depends on NAD(+) as a cofactor.

The protein localises to the cytoplasm. It carries out the reaction 7-phospho-2-dehydro-3-deoxy-D-arabino-heptonate = 3-dehydroquinate + phosphate. The protein operates within metabolic intermediate biosynthesis; chorismate biosynthesis; chorismate from D-erythrose 4-phosphate and phosphoenolpyruvate: step 2/7. Functionally, catalyzes the conversion of 3-deoxy-D-arabino-heptulosonate 7-phosphate (DAHP) to dehydroquinate (DHQ). This chain is 3-dehydroquinate synthase, found in Chlorobium chlorochromatii (strain CaD3).